We begin with the raw amino-acid sequence, 230 residues long: Prepilin leader peptidase/N-methyltransferase (230 aa).

7 helical membrane-spanning segments follow: residues 1-21 (MIYFTMFLLGGILGIALWFYL), 60-80 (GHILRYFFSIGVGFIFLQIAF), 84-104 (IFTVWIGLTLIILWTISYLDW), 114-134 (CLWLLTLGLFGADNNFSLLTL), 140-160 (SAASFFIVFYVIYWLAKFYYG), 181-201 (LETLPHFLLLASVLGICFSLI), and 208-228 (FLPFAPFMNLSAVIIYFVKYY).

It belongs to the peptidase A24 family.

The protein localises to the cell inner membrane. The catalysed reaction is Typically cleaves a -Gly-|-Phe- bond to release an N-terminal, basic peptide of 5-8 residues from type IV prepilin, and then N-methylates the new N-terminal amino group, the methyl donor being S-adenosyl-L-methionine.. In terms of biological role, plays a role in type II pseudopili formation by proteolytically removing the leader sequence from substrate proteins and subsequently monomethylating the alpha-amino group of the newly exposed N-terminal phenylalanine. Substrates include proteins required for biogenesis of the type II general secretory apparatus. The polypeptide is Prepilin leader peptidase/N-methyltransferase (hofD) (Haemophilus influenzae (strain ATCC 51907 / DSM 11121 / KW20 / Rd)).